The sequence spans 244 residues: Phosphoadenosine 5'-phosphosulfate reductase (244 aa).

The Nucleophile; cysteine thiosulfonate intermediate role is filled by cysteine 239.

Belongs to the PAPS reductase family. CysH subfamily.

It is found in the cytoplasm. The enzyme catalyses [thioredoxin]-disulfide + sulfite + adenosine 3',5'-bisphosphate + 2 H(+) = [thioredoxin]-dithiol + 3'-phosphoadenylyl sulfate. Its pathway is sulfur metabolism; hydrogen sulfide biosynthesis; sulfite from sulfate: step 3/3. In terms of biological role, catalyzes the formation of sulfite from phosphoadenosine 5'-phosphosulfate (PAPS) using thioredoxin as an electron donor. The sequence is that of Phosphoadenosine 5'-phosphosulfate reductase from Escherichia coli O8 (strain IAI1).